The following is a 661-amino-acid chain: UvrABC system protein B (661 aa).

Residues 26–181 (KGIQEGRKHQ…LLRKLVDIQY (156 aa)) form the Helicase ATP-binding domain. 39-46 (GATGTGKT) is a binding site for ATP. The short motif at 92 to 115 (YYDYYQPEAYVPQTDTFIEKDASI) is the Beta-hairpin element. Residues 430-596 (QIDDLIGEIQ…TINKEIRDVI (167 aa)) enclose the Helicase C-terminal domain. Positions 625-660 (QKVVEQMEHEMKEAARALDFERAAELRDLLLELKAE) constitute a UVR domain.

It belongs to the UvrB family. Forms a heterotetramer with UvrA during the search for lesions. Interacts with UvrC in an incision complex.

It is found in the cytoplasm. Its function is as follows. The UvrABC repair system catalyzes the recognition and processing of DNA lesions. A damage recognition complex composed of 2 UvrA and 2 UvrB subunits scans DNA for abnormalities. Upon binding of the UvrA(2)B(2) complex to a putative damaged site, the DNA wraps around one UvrB monomer. DNA wrap is dependent on ATP binding by UvrB and probably causes local melting of the DNA helix, facilitating insertion of UvrB beta-hairpin between the DNA strands. Then UvrB probes one DNA strand for the presence of a lesion. If a lesion is found the UvrA subunits dissociate and the UvrB-DNA preincision complex is formed. This complex is subsequently bound by UvrC and the second UvrB is released. If no lesion is found, the DNA wraps around the other UvrB subunit that will check the other stand for damage. The polypeptide is UvrABC system protein B (Bacillus velezensis (strain DSM 23117 / BGSC 10A6 / LMG 26770 / FZB42) (Bacillus amyloliquefaciens subsp. plantarum)).